The sequence spans 319 residues: Protein-methionine-sulfoxide reductase catalytic subunit MsrP (319 aa).

The tat-type signal signal peptide spans Met1 to Ala54. Mo-molybdopterin is bound by residues Asn75, Tyr78–Glu79, Cys133, Asn218, Arg223, and Gly234–Lys236.

Belongs to the MsrP family. As to quaternary structure, heterodimer of a catalytic subunit (MsrP) and a heme-binding subunit (MsrQ). It depends on Mo-molybdopterin as a cofactor. Post-translationally, predicted to be exported by the Tat system. The position of the signal peptide cleavage has not been experimentally proven.

It is found in the periplasm. The enzyme catalyses L-methionyl-[protein] + a quinone + H2O = L-methionyl-(S)-S-oxide-[protein] + a quinol. It catalyses the reaction L-methionyl-[protein] + a quinone + H2O = L-methionyl-(R)-S-oxide-[protein] + a quinol. Part of the MsrPQ system that repairs oxidized periplasmic proteins containing methionine sulfoxide residues (Met-O), using respiratory chain electrons. Thus protects these proteins from oxidative-stress damage caused by reactive species of oxygen and chlorine generated by the host defense mechanisms. MsrPQ is essential for the maintenance of envelope integrity under bleach stress, rescuing a wide series of structurally unrelated periplasmic proteins from methionine oxidation. The catalytic subunit MsrP is non-stereospecific, being able to reduce both (R-) and (S-) diastereoisomers of methionine sulfoxide. The polypeptide is Protein-methionine-sulfoxide reductase catalytic subunit MsrP (Brucella melitensis biotype 1 (strain ATCC 23456 / CCUG 17765 / NCTC 10094 / 16M)).